Consider the following 389-residue polypeptide: MSGNKSALSVVVAGGGTAGHIEPALAVADAVKAAQPDTRITALGTARGLETTLVPARGYTLELIPPVPLPRKPTMDLVKLPTRILASVRKTREVLDSVDADVIVGFGGYVALPAYLAARGGVLRRRRKIPIVIHEANASAGIANKIGARLATRVLAAVPGSGVKNRGDQDAEIVGIPVRASIANFDRAGLRSQAREYFGLPQDGPVLLVFGGSQGAKSLNDAVSGAAEELAKAGISVLHAHGPKNSLEVTQYSETAPYVAVPYLSRMDLAYAAADATICRSGAMTVAEVSAVGLPAVYVPLPHGNGEQELNAKPVVAAGGAIIVSDNELTPTFVAGTVVPMLSDSARLDKMSSGAANVGHRTAATEIARIVLDIAAKENAVQENARGNR.

Residues 17–19, Asn-137, Arg-179, Ser-213, and Gln-308 each bind UDP-N-acetyl-alpha-D-glucosamine; that span reads TAG.

It belongs to the glycosyltransferase 28 family. MurG subfamily.

The protein localises to the cell membrane. The enzyme catalyses di-trans,octa-cis-undecaprenyl diphospho-N-acetyl-alpha-D-muramoyl-L-alanyl-D-glutamyl-meso-2,6-diaminopimeloyl-D-alanyl-D-alanine + UDP-N-acetyl-alpha-D-glucosamine = di-trans,octa-cis-undecaprenyl diphospho-[N-acetyl-alpha-D-glucosaminyl-(1-&gt;4)]-N-acetyl-alpha-D-muramoyl-L-alanyl-D-glutamyl-meso-2,6-diaminopimeloyl-D-alanyl-D-alanine + UDP + H(+). Its pathway is cell wall biogenesis; peptidoglycan biosynthesis. In terms of biological role, cell wall formation. Catalyzes the transfer of a GlcNAc subunit on undecaprenyl-pyrophosphoryl-MurNAc-pentapeptide (lipid intermediate I) to form undecaprenyl-pyrophosphoryl-MurNAc-(pentapeptide)GlcNAc (lipid intermediate II). The polypeptide is UDP-N-acetylglucosamine--N-acetylmuramyl-(pentapeptide) pyrophosphoryl-undecaprenol N-acetylglucosamine transferase (Rhodococcus erythropolis (strain PR4 / NBRC 100887)).